A 445-amino-acid polypeptide reads, in one-letter code: UPF0210 protein STER_0157 (445 aa).

Belongs to the UPF0210 family. Homodimer.

The polypeptide is UPF0210 protein STER_0157 (Streptococcus thermophilus (strain ATCC BAA-491 / LMD-9)).